The chain runs to 269 residues: uncharacterized protein (269 aa).

The segment at residues 3–105 (WIINDNIEFW…VPRRGFKIHN (103 aa)) is a DNA-binding region (ompR/PhoB-type).

The protein to V.cholerae cholera toxin transcriptional activator (ToxR).

This is an uncharacterized protein from Escherichia coli (strain K12).